A 400-amino-acid polypeptide reads, in one-letter code: Elongation factor Tu 1 (400 aa).

The tr-type G domain maps to 10-209; sequence KPHVNIGTIG…AVDEYIPTPQ (200 aa). The interval 19–26 is G1; sequence GHVDHGKT. 19-26 is a binding site for GTP; it reads GHVDHGKT. Thr-26 contacts Mg(2+). The segment at 60–64 is G2; that stretch reads GITIN. Residues 81-84 are G3; sequence DCPG. Residues 81–85 and 136–139 each bind GTP; these read DCPGH and NKAD. Positions 136-139 are G4; that stretch reads NKAD. Residues 174–176 are G5; that stretch reads SAL.

The protein belongs to the TRAFAC class translation factor GTPase superfamily. Classic translation factor GTPase family. EF-Tu/EF-1A subfamily. Monomer.

The protein localises to the cytoplasm. The enzyme catalyses GTP + H2O = GDP + phosphate + H(+). Its function is as follows. GTP hydrolase that promotes the GTP-dependent binding of aminoacyl-tRNA to the A-site of ribosomes during protein biosynthesis. In Pelotomaculum thermopropionicum (strain DSM 13744 / JCM 10971 / SI), this protein is Elongation factor Tu 1.